The chain runs to 90 residues: Probable Fe(2+)-trafficking protein (90 aa).

Belongs to the Fe(2+)-trafficking protein family. Monomer.

In terms of biological role, could be a mediator in iron transactions between iron acquisition and iron-requiring processes, such as synthesis and/or repair of Fe-S clusters in biosynthetic enzymes. This chain is Probable Fe(2+)-trafficking protein, found in Pectobacterium carotovorum subsp. carotovorum (strain PC1).